Here is a 369-residue protein sequence, read N- to C-terminus: MNKAYYIGLMSGTSMDGVDAVLVDFAGEQPQLIATHTEAIPSHLLKGLQRLCLPGNDEINRLGRLDRSVGKLFALAVNNLLAKAQIAKEDIIAIGSHGQTVRHMPNLEVGFTLQIGDPNTIATETGIDVIADFRRKDIALGGQGAPLVPAFHQQTFAQVGKKRVILNIGGIANITYLTGNREEVLGFDTGPGNTLIDAWIQQVKNEPYDKDGEWAASGNTDQQLLAQLLSHPYFSLAYPKSTGRELFNQAWLEQQLSEFNQLDEEDIQSTLLDLTCHSIARDILKLAPVGELFVCGGGAFNTELMQRLAALLPDYHIDTTSALGVDPKWAEGIAFAWLAMRHNLGLPANLPAVTGASREAVLGGRFSAK.

12-19 (GTSMDGVD) provides a ligand contact to ATP.

This sequence belongs to the anhydro-N-acetylmuramic acid kinase family.

It catalyses the reaction 1,6-anhydro-N-acetyl-beta-muramate + ATP + H2O = N-acetyl-D-muramate 6-phosphate + ADP + H(+). The protein operates within amino-sugar metabolism; 1,6-anhydro-N-acetylmuramate degradation. It participates in cell wall biogenesis; peptidoglycan recycling. Functionally, catalyzes the specific phosphorylation of 1,6-anhydro-N-acetylmuramic acid (anhMurNAc) with the simultaneous cleavage of the 1,6-anhydro ring, generating MurNAc-6-P. Is required for the utilization of anhMurNAc either imported from the medium or derived from its own cell wall murein, and thus plays a role in cell wall recycling. This is Anhydro-N-acetylmuramic acid kinase from Shewanella sp. (strain MR-4).